A 465-amino-acid polypeptide reads, in one-letter code: UDP-N-acetylmuramate--L-alanine ligase (465 aa).

Residue glycine 118 to threonine 124 participates in ATP binding.

This sequence belongs to the MurCDEF family.

It localises to the cytoplasm. It catalyses the reaction UDP-N-acetyl-alpha-D-muramate + L-alanine + ATP = UDP-N-acetyl-alpha-D-muramoyl-L-alanine + ADP + phosphate + H(+). The protein operates within cell wall biogenesis; peptidoglycan biosynthesis. Cell wall formation. This Ruegeria pomeroyi (strain ATCC 700808 / DSM 15171 / DSS-3) (Silicibacter pomeroyi) protein is UDP-N-acetylmuramate--L-alanine ligase.